A 142-amino-acid chain; its full sequence is Serine/threonine-protein kinase BtrW (142 aa).

Belongs to the anti-sigma-factor family. As to quaternary structure, probably able to multimerize; interacts with BtrV.

It carries out the reaction L-seryl-[protein] + ATP = O-phospho-L-seryl-[protein] + ADP + H(+). The enzyme catalyses L-threonyl-[protein] + ATP = O-phospho-L-threonyl-[protein] + ADP + H(+). In terms of biological role, possible negative regulator of sigma-B activity. Phosphorylates and inactivates its specific antagonist protein, BtrV. Upon phosphorylation of BtrV, BtrW is released and binds to an unknown partner(s) that might be sigma-B, thereby blocking its ability to form a complex with its partner (possibly an RNA polymerase holoenzyme (E-sigma-B)). Involved in type III secretion system (T3SS). Phosphorylates BtrV. This chain is Serine/threonine-protein kinase BtrW (btrW), found in Bordetella bronchiseptica (strain ATCC BAA-588 / NCTC 13252 / RB50) (Alcaligenes bronchisepticus).